The following is a 119-amino-acid chain: Protein YdaY (119 aa).

In Escherichia coli (strain K12), this protein is Protein YdaY (ydaY).